Consider the following 383-residue polypeptide: Histidinol-phosphate aminotransferase (383 aa).

Lysine 240 is subject to N6-(pyridoxal phosphate)lysine.

It belongs to the class-II pyridoxal-phosphate-dependent aminotransferase family. Histidinol-phosphate aminotransferase subfamily. In terms of assembly, homodimer. Pyridoxal 5'-phosphate is required as a cofactor.

The enzyme catalyses L-histidinol phosphate + 2-oxoglutarate = 3-(imidazol-4-yl)-2-oxopropyl phosphate + L-glutamate. Its pathway is amino-acid biosynthesis; L-histidine biosynthesis; L-histidine from 5-phospho-alpha-D-ribose 1-diphosphate: step 7/9. The polypeptide is Histidinol-phosphate aminotransferase (Oleidesulfovibrio alaskensis (strain ATCC BAA-1058 / DSM 17464 / G20) (Desulfovibrio alaskensis)).